Here is a 99-residue protein sequence, read N- to C-terminus: MAEKDIDKLLSMTDSKYRLSVVTAKRALQLRSGAPSVLPVEQRVRTRNLVTQAMRELATGKLTVGTSLLDEQRFHQDYVRQRQAQIQAQLNAERERERD.

The protein belongs to the RNA polymerase subunit omega family. In terms of assembly, the RNAP catalytic core consists of 2 alpha, 1 beta, 1 beta' and 1 omega subunit. When a sigma factor is associated with the core the holoenzyme is formed, which can initiate transcription.

The enzyme catalyses RNA(n) + a ribonucleoside 5'-triphosphate = RNA(n+1) + diphosphate. Promotes RNA polymerase assembly. Latches the N- and C-terminal regions of the beta' subunit thereby facilitating its interaction with the beta and alpha subunits. This Deinococcus deserti (strain DSM 17065 / CIP 109153 / LMG 22923 / VCD115) protein is DNA-directed RNA polymerase subunit omega.